Here is a 214-residue protein sequence, read N- to C-terminus: Ribonuclease HII (214 aa).

The region spanning 26-214 (EIVCGVDEAG…PVRAALDLIR (189 aa)) is the RNase H type-2 domain. Asp-32, Glu-33, and Asp-124 together coordinate a divalent metal cation.

Belongs to the RNase HII family. Requires Mn(2+) as cofactor. It depends on Mg(2+) as a cofactor.

It is found in the cytoplasm. The enzyme catalyses Endonucleolytic cleavage to 5'-phosphomonoester.. Functionally, endonuclease that specifically degrades the RNA of RNA-DNA hybrids. The sequence is that of Ribonuclease HII from Burkholderia lata (strain ATCC 17760 / DSM 23089 / LMG 22485 / NCIMB 9086 / R18194 / 383).